The following is a 167-amino-acid chain: Photosystem I assembly protein Ycf3 (167 aa).

TPR repeat units follow at residues A35–P68, S72–L105, and G120–N153.

It belongs to the Ycf3 family.

Its subcellular location is the plastid. It is found in the chloroplast thylakoid membrane. In terms of biological role, essential for the assembly of the photosystem I (PSI) complex. May act as a chaperone-like factor to guide the assembly of the PSI subunits. The protein is Photosystem I assembly protein Ycf3 of Marchantia polymorpha (Common liverwort).